The sequence spans 150 residues: Cytosine deaminase (150 aa).

The region spanning 3 to 121 is the CMP/dCMP-type deaminase domain; sequence FDDKKGLQVA…KLLIENGVEV (119 aa). Asparagine 44 is a binding site for substrate. A Zn(2+)-binding site is contributed by histidine 55. The active-site Proton donor is the glutamate 57. The Zn(2+) site is built by cysteine 84 and cysteine 87. Aspartate 147 serves as a coordination point for substrate.

This sequence belongs to the cytidine and deoxycytidylate deaminase family. In terms of assembly, homodimer. Zn(2+) is required as a cofactor.

The protein resides in the cytoplasm. Its subcellular location is the nucleus. It catalyses the reaction cytosine + H2O + H(+) = uracil + NH4(+). It functions in the pathway pyrimidine metabolism; UMP biosynthesis via salvage pathway; uracil from cytosine: step 1/1. Catalyzes the hydrolytic deamination of cytosine to uracil or 5-methylcytosine to thymine. Is involved in the pyrimidine salvage pathway, which allows the cell to utilize cytosine for pyrimidine nucleotide synthesis. The protein is Cytosine deaminase of Candida albicans (strain SC5314 / ATCC MYA-2876) (Yeast).